The chain runs to 639 residues: Sec1 family domain-containing protein 1 (639 aa).

Phosphoserine is present on residues Ser-34, Ser-300, and Ser-525.

This sequence belongs to the STXBP/unc-18/SEC1 family. Interacts with STX17. Interacts with STX5A. Interacts with the COG complex via COG4.

It localises to the cytoplasm. The protein localises to the endoplasmic reticulum membrane. It is found in the golgi apparatus. Its subcellular location is the golgi stack membrane. Plays a role in SNARE-pin assembly and Golgi-to-ER retrograde transport via its interaction with COG4. Involved in vesicular transport between the endoplasmic reticulum and the Golgi. The chain is Sec1 family domain-containing protein 1 (Scfd1) from Mus musculus (Mouse).